The following is a 585-amino-acid chain: Arginine--tRNA ligase (585 aa).

Residues 131-141 carry the 'HIGH' region motif; it reads ANPTGPMHVGH.

The protein belongs to the class-I aminoacyl-tRNA synthetase family. Monomer.

The protein localises to the cytoplasm. The enzyme catalyses tRNA(Arg) + L-arginine + ATP = L-arginyl-tRNA(Arg) + AMP + diphosphate. This is Arginine--tRNA ligase from Agrobacterium fabrum (strain C58 / ATCC 33970) (Agrobacterium tumefaciens (strain C58)).